Here is a 212-residue protein sequence, read N- to C-terminus: Phosphatidylserine decarboxylase proenzyme (212 aa).

The Schiff-base intermediate with substrate; via pyruvic acid role is filled by Ser-182. Residue Ser-182 is modified to Pyruvic acid (Ser); by autocatalysis.

It belongs to the phosphatidylserine decarboxylase family. PSD-A subfamily. Heterodimer of a large membrane-associated beta subunit and a small pyruvoyl-containing alpha subunit. Pyruvate serves as cofactor. In terms of processing, is synthesized initially as an inactive proenzyme. Formation of the active enzyme involves a self-maturation process in which the active site pyruvoyl group is generated from an internal serine residue via an autocatalytic post-translational modification. Two non-identical subunits are generated from the proenzyme in this reaction, and the pyruvate is formed at the N-terminus of the alpha chain, which is derived from the carboxyl end of the proenzyme. The post-translation cleavage follows an unusual pathway, termed non-hydrolytic serinolysis, in which the side chain hydroxyl group of the serine supplies its oxygen atom to form the C-terminus of the beta chain, while the remainder of the serine residue undergoes an oxidative deamination to produce ammonia and the pyruvoyl prosthetic group on the alpha chain.

It is found in the cell membrane. The enzyme catalyses a 1,2-diacyl-sn-glycero-3-phospho-L-serine + H(+) = a 1,2-diacyl-sn-glycero-3-phosphoethanolamine + CO2. It participates in phospholipid metabolism; phosphatidylethanolamine biosynthesis; phosphatidylethanolamine from CDP-diacylglycerol: step 2/2. Its function is as follows. Catalyzes the formation of phosphatidylethanolamine (PtdEtn) from phosphatidylserine (PtdSer). This Paraburkholderia phymatum (strain DSM 17167 / CIP 108236 / LMG 21445 / STM815) (Burkholderia phymatum) protein is Phosphatidylserine decarboxylase proenzyme.